We begin with the raw amino-acid sequence, 644 residues long: Tubulin--tyrosine ligase-like protein 12 (644 aa).

Residues 1–13 show a composition bias toward basic and acidic residues; sequence MEAERGPERRPAE. The segment at 1 to 25 is disordered; that stretch reads MEAERGPERRPAERSSPGQTPEEGA. Positions 300 to 644 constitute a TTL domain; sequence PHGHIFKVYT…PGGCHVTCLV (345 aa). ATP is bound by residues 450 to 453, Lys468, and Asp470; that span reads SKYI.

It belongs to the tubulin--tyrosine ligase family. As to quaternary structure, interacts with MAVS; the interaction prevents MAVS binding to TBK1 and IKBKE. Interacts (via N-terminus) with TBK1 (via protein kinase domain). Interacts (via TTL domain) with IKBKE (via protein kinase domain). Interacts with tubulin alpha. Interacts with histone H3 and histone H4 (when trimethylated at 'Lys-20' (H4K20me3)). Interacts with CBX3. As to expression, expressed in the basal layer of prostate and endothelial cells. Increased expression in prostatic intraepithelial neoplasia and metastatic lesions.

Its subcellular location is the cytoplasm. The protein localises to the midbody. The protein resides in the cytoskeleton. It is found in the microtubule organizing center. It localises to the centrosome. Its subcellular location is the spindle. The protein localises to the nucleus. Functionally, negatively regulates post-translational modifications of tubulin, including detyrosination of the C-terminus and polyglutamylation of glutamate residues. Also, indirectly promotes histone H4 trimethylation at 'Lys-20' (H4K20me3). Probably by controlling tubulin and/or histone H4 post-translational modifications, plays a role in mitosis and in maintaining chromosome number stability. During RNA virus-mediated infection, acts as a negative regulator of the RIG-I pathway by preventing MAVS binding to TBK1 and IKBKE. The chain is Tubulin--tyrosine ligase-like protein 12 (TTLL12) from Homo sapiens (Human).